We begin with the raw amino-acid sequence, 191 residues long: uncharacterized protein (191 aa).

The segment at 52–112 is disordered; it reads NKQENQTESS…TNKDTNIETN (61 aa). The span at 57-70 shows a compositional bias: polar residues; that stretch reads QTESSDLNNTDSLV. The segment covering 71-94 has biased composition (low complexity); sequence DSNSDNQTNTTDTSTNNVENLNEN. A coiled-coil region spans residues 138–172; the sequence is QDKISDTERIRFLEEKVSKLERKIRTLSLQMTKIS.

This is an uncharacterized protein from Acanthamoeba polyphaga mimivirus (APMV).